A 184-amino-acid chain; its full sequence is Lipid A acyltransferase PagP (184 aa).

The N-terminal stretch at Met1–Ala22 is a signal peptide. Catalysis depends on residues His57, Asp100, and Ser101.

It belongs to the lipid A palmitoyltransferase family. As to quaternary structure, homodimer.

It is found in the cell outer membrane. The enzyme catalyses a lipid A + a 1,2-diacyl-sn-glycero-3-phosphocholine = a hepta-acyl lipid A + a 2-acyl-sn-glycero-3-phosphocholine. The catalysed reaction is a lipid IVA + a 1,2-diacyl-sn-glycero-3-phosphocholine = a lipid IVB + a 2-acyl-sn-glycero-3-phosphocholine. It catalyses the reaction a lipid IIA + a 1,2-diacyl-sn-glycero-3-phosphocholine = a lipid IIB + a 2-acyl-sn-glycero-3-phosphocholine. Functionally, transfers a fatty acid residue from the sn-1 position of a phospholipid to the N-linked hydroxyfatty acid chain on the proximal unit of lipid A or its precursors. The protein is Lipid A acyltransferase PagP of Methylobacillus flagellatus (strain ATCC 51484 / DSM 6875 / VKM B-1610 / KT).